The primary structure comprises 813 residues: Receptor-like protein 48 (813 aa).

The N-terminal stretch at 1-30 (MHSCSERRMMTVIWSLCLIFCLSNSILAIA) is a signal peptide. Topologically, residues 31–786 (KDLCLPDQRD…EDEEKEEKNQ (756 aa)) are extracellular. Residues asparagine 69, asparagine 105, and asparagine 123 are each glycosylated (N-linked (GlcNAc...) asparagine). 3 LRR repeats span residues 111–134 (LQHLQSLELSSNNISGILPDSIGN), 136–159 (KYLRSLSFRTCHLFGKIPSSLGSL), and 160–182 (SYLTHLDLSYNDFTSEGPDSGGN). 2 N-linked (GlcNAc...) asparagine glycosylation sites follow: asparagine 195 and asparagine 216. LRR repeat units lie at residues 196–219 (LSSVTWIDLGSNQLKGMLPSNMSS), 220–244 (LSKLVSFDISENSFSGSIPSSLFMI), 245–260 (PSLNFSGPLEIGNISS), 261–285 (HSELGYLYMGENNFNGPIPGSLSKL), 288–310 (LRDLSLSFWNTGRGIVDFSIFLH), 311–335 (LKSLCSLDLSYLNTRSMVDLSFFSH), 336–359 (LMSLDELDLSGINLKISSTLSFPS), 361–381 (TGTLILASCNIVEFPKFLENQ), 382–405 (TSLFYLDISANHIEGQVPEWLWRL), 406–432 (PTLSFVNIAQNSFSGELPMLPNSIYSF), 434–450 (ASDNQFSGEIPRTVCEL), 451–473 (VSLNTLVLSNNKFSGSIPRCFEN), 475–498 (KTISILHLRNNSLSGVFPKEIISE), 500–521 (LTSLDVGHNWLSGQLPKSLIKC), 523–544 (DLEFLNVEDNRINDKFPFWLRS), 545–571 (LSNLQILVLRSNEFYGPIFSLEDSLSF), 572–595 (PKLRIFDISENHFTGVLPSDYFAG), 642–666 (FTIYKTIDVSGNRLEGDIPESIGIL), 667–690 (KELIVLNMSNNAFTGHIPPSLSNL), 691–714 (SNLQSLDLSQNRLSGSIPPELGKL), and 716–739 (FLEWMNFSYNRLEGPIPQATQIQS). Asparagine 248 and asparagine 257 each carry an N-linked (GlcNAc...) asparagine glycan. N-linked (GlcNAc...) asparagine glycosylation is present at asparagine 380. The N-linked (GlcNAc...) asparagine glycan is linked to asparagine 484. Asparagine 673 and asparagine 689 each carry an N-linked (GlcNAc...) asparagine glycan. Residues asparagine 721 and asparagine 741 are each glycosylated (N-linked (GlcNAc...) asparagine). The disordered stretch occupies residues 756 to 785 (FLNKCGGEEEEEEEATKQEEDEDEEKEEKN). Acidic residues predominate over residues 763–781 (EEEEEEEATKQEEDEDEEK). Residues 787–807 (VFSWIAAAIGYVPGVFCGLTI) traverse the membrane as a helical segment. Over 808 to 813 (AHILTS) the chain is Cytoplasmic.

Belongs to the RLP family.

It is found in the cell membrane. Functionally, plays a role in root hair development. This chain is Receptor-like protein 48, found in Arabidopsis thaliana (Mouse-ear cress).